Reading from the N-terminus, the 701-residue chain is Ephexin-1 (701 aa).

2 stretches are compositionally biased toward basic and acidic residues: residues 1–11 (METKNSEDQGK) and 26–48 (GPAE…EEPR). Positions 1–141 (METKNSEDQG…TPEECPALTD (141 aa)) are disordered. Residues 1–264 (METKNSEDQG…LDILQPEETK (264 aa)) are regulatory region; modulates activity toward RHOA, RAC1 and CDC42. A compositionally biased stretch (polar residues) spans 120–132 (ASESSSTPGNGTT). Phosphotyrosine is present on Tyr172. Positions 187–226 (RRQQDAEIQGNSDGSQAGEDNAEEEEEEEEEPASPPERRA) are disordered. Residues 206 to 218 (DNAEEEEEEEEEP) show a composition bias toward acidic residues. The region spanning 264–448 (KLQEAMFELV…EMVVKACNEG (185 aa)) is the DH domain. A PH domain is found at 480-592 (WLLKQGELQQ…WMTSLAPNRR (113 aa)). The region spanning 603 to 664 (LDCPQVQCVH…PSSMTEEILN (62 aa)) is the SH3 domain. The segment covering 679 to 690 (HKMEDPQRSQNK) has biased composition (basic and acidic residues). Residues 679–701 (HKMEDPQRSQNKDRRKLGSRNRQ) form a disordered region. Over residues 691–701 (DRRKLGSRNRQ) the composition is skewed to basic residues.

As to quaternary structure, interacts with CDK5R1 and EPHA4; activated by EPHA4 through the CDK5 kinase. Post-translationally, phosphorylation by CDK5 upon EPHA4 activation by EFNA1 may regulate dendritic spine morphogenesis. Src-dependent phosphorylation at Tyr-172 upon EPHA4 activation increases the guanine exchange factor activity toward RHOA. Expressed in telencephalic neurons (at protein level). Expressed in brain, spinal cord and testis.

The protein localises to the cytoplasm. Its subcellular location is the membrane. It localises to the cell projection. It is found in the growth cone. In terms of biological role, acts as a guanine nucleotide exchange factor (GEF) which differentially activates the GTPases RHOA, RAC1 and CDC42. Plays a role in axon guidance regulating ephrin-induced growth cone collapse and dendritic spine morphogenesis. Upon activation by ephrin through EPHA4, the GEF activity switches toward RHOA resulting in its activation. Activated RHOA promotes cone retraction at the expense of RAC1- and CDC42-stimulated growth cone extension. In Rattus norvegicus (Rat), this protein is Ephexin-1 (Ngef).